Consider the following 241-residue polypeptide: Carboxysome assembly protein CcmN (241 aa).

The disordered stretch occupies residues 123–206 (GASSPTTDSV…PTAPTVVTTA (84 aa)). Residues 185–195 (QISSNRSPGES) are compositionally biased toward polar residues. A compositionally biased stretch (low complexity) spans 196 to 206 (TPTAPTVVTTA). The short motif at 219 to 241 (VVGQVYINQLLLTLFPERRYFSS) is the Encapsulation peptide element.

Belongs to the CcmN family. In terms of assembly, interacts with full-length and the N-terminal 249 residues of CcmM; a probable CcmM-CcaA-CcmN complex can also be isolated. Interacts with CcmK.

Its subcellular location is the carboxysome. In terms of biological role, required for carboxysome formation; the N-terminus interacts with CcmM which itself binds RuBisCO (ribulose bisphosphate carboxylase, rbcL-rbcS). May also contact shell protein CcmK to help assemble the carboxysome. Beta-carboxysome assembly initiates when soluble RuBisCO is condensed into a liquid matrix in a pre-carboxysome by the RbcS-like domains of probably both forms of CcmM. CcmN interacts with the N-terminus of full-length CcmM, and then recruits the CcmK major shell protein via CcmN's encapsulation peptide. Shell formation requires CcmK proteins and CcmO. CcmL caps the otherwise elongated carboxysome. Once fully encapsulated carboxysomes are formed, they migrate within the cell probably via interactions with the cytoskeleton. The polypeptide is Carboxysome assembly protein CcmN (Synechocystis sp. (strain ATCC 27184 / PCC 6803 / Kazusa)).